The following is a 229-amino-acid chain: Uracil-DNA glycosylase (229 aa).

Aspartate 65 acts as the Proton acceptor in catalysis.

This sequence belongs to the uracil-DNA glycosylase (UDG) superfamily. UNG family.

The protein localises to the cytoplasm. It carries out the reaction Hydrolyzes single-stranded DNA or mismatched double-stranded DNA and polynucleotides, releasing free uracil.. Excises uracil residues from the DNA which can arise as a result of misincorporation of dUMP residues by DNA polymerase or due to deamination of cytosine. The chain is Uracil-DNA glycosylase from Limosilactobacillus fermentum (strain NBRC 3956 / LMG 18251) (Lactobacillus fermentum).